A 268-amino-acid polypeptide reads, in one-letter code: tRNA pseudouridine synthase A (268 aa).

Asp52 serves as the catalytic Nucleophile. Substrate is bound at residue Tyr113.

The protein belongs to the tRNA pseudouridine synthase TruA family. In terms of assembly, homodimer.

The enzyme catalyses uridine(38/39/40) in tRNA = pseudouridine(38/39/40) in tRNA. Its function is as follows. Formation of pseudouridine at positions 38, 39 and 40 in the anticodon stem and loop of transfer RNAs. This chain is tRNA pseudouridine synthase A, found in Chlamydia abortus (strain DSM 27085 / S26/3) (Chlamydophila abortus).